The sequence spans 404 residues: Cysteine desulfurase IscS (404 aa).

Residues alanine 75 to threonine 76, asparagine 155, glutamine 183, and serine 203 to histidine 205 contribute to the pyridoxal 5'-phosphate site. N6-(pyridoxal phosphate)lysine is present on lysine 206. Threonine 243 is a pyridoxal 5'-phosphate binding site. Catalysis depends on cysteine 328, which acts as the Cysteine persulfide intermediate. Cysteine 328 lines the [2Fe-2S] cluster pocket.

The protein belongs to the class-V pyridoxal-phosphate-dependent aminotransferase family. NifS/IscS subfamily. In terms of assembly, homodimer. Forms a heterotetramer with IscU, interacts with other sulfur acceptors. It depends on pyridoxal 5'-phosphate as a cofactor.

The protein localises to the cytoplasm. It carries out the reaction (sulfur carrier)-H + L-cysteine = (sulfur carrier)-SH + L-alanine. It functions in the pathway cofactor biosynthesis; iron-sulfur cluster biosynthesis. Functionally, master enzyme that delivers sulfur to a number of partners involved in Fe-S cluster assembly, tRNA modification or cofactor biosynthesis. Catalyzes the removal of elemental sulfur atoms from cysteine to produce alanine. Functions as a sulfur delivery protein for Fe-S cluster synthesis onto IscU, an Fe-S scaffold assembly protein, as well as other S acceptor proteins. The protein is Cysteine desulfurase IscS of Pseudomonas aeruginosa (strain LESB58).